The primary structure comprises 151 residues: UPF0178 protein Shal_3046 (151 aa).

This sequence belongs to the UPF0178 family.

In Shewanella halifaxensis (strain HAW-EB4), this protein is UPF0178 protein Shal_3046.